The chain runs to 250 residues: Probable phosphatase VIBHAR_04983 (250 aa).

Zn(2+) is bound by residues His8, His10, His16, His41, Glu74, His102, His132, Asp194, and His196.

It belongs to the PHP family. Zn(2+) is required as a cofactor.

This Vibrio campbellii (strain ATCC BAA-1116) protein is Probable phosphatase VIBHAR_04983.